We begin with the raw amino-acid sequence, 260 residues long: Snake venom serine protease pallabin-2 (260 aa).

The first 18 residues, 1-18 (MVLIKVLANLLILQLSYA), serve as a signal peptide directing secretion. Residues 19-24 (QKSSEL) constitute a propeptide that is removed on maturation. Residues 25–251 (IIGGDECNIN…HLDWIENIIA (227 aa)) enclose the Peptidase S1 domain. 6 disulfide bridges follow: C31–C163, C50–C66, C98–C258, C142–C212, C174–C191, and C202–C227. H65 acts as the Charge relay system in catalysis. N-linked (GlcNAc...) asparagine glycosylation occurs at N103. The active-site Charge relay system is the D110. S206 (charge relay system) is an active-site residue.

The protein belongs to the peptidase S1 family. Snake venom subfamily. As to quaternary structure, monomer. As to expression, expressed by the venom gland.

Its subcellular location is the secreted. Snake venom serine protease that may act in the hemostasis system of the prey. The sequence is that of Snake venom serine protease pallabin-2 (JZTHR7) from Gloydius halys (Chinese water mocassin).